The chain runs to 283 residues: Ubiquinone biosynthesis protein COQ4, mitochondrial (283 aa).

The transit peptide at 1–25 (MAIAKSVRARAVGLRSLRVLCAQRS) directs the protein to the mitochondrion. Zn(2+) contacts are provided by histidine 166, aspartate 167, histidine 170, and glutamate 182.

Belongs to the COQ4 family. As to quaternary structure, component of a multi-subunit COQ enzyme complex, composed of at least COQ3, COQ4, COQ5, COQ6, COQ7 and COQ9. Zn(2+) serves as cofactor.

The protein localises to the mitochondrion inner membrane. The enzyme catalyses a 4-hydroxy-3-methoxy-5-(all-trans-polyprenyl)benzoate + H(+) = a 2-methoxy-6-(all-trans-polyprenyl)phenol + CO2. It participates in cofactor biosynthesis; ubiquinone biosynthesis. Its function is as follows. Lyase that catalyzes the C1-decarboxylation of 4-hydroxy-3-methoxy-5-(all-trans-polyprenyl)benzoic acid into 2-methoxy-6-(all-trans-polyprenyl)phenol during ubiquinone biosynthesis. The chain is Ubiquinone biosynthesis protein COQ4, mitochondrial from Coccidioides immitis (strain RS) (Valley fever fungus).